We begin with the raw amino-acid sequence, 433 residues long: Homoserine dehydrogenase (433 aa).

NADPH-binding residues include threonine 13 and valine 14. Residues valine 14 and valine 33 each contribute to the NAD(+) site. Valine 14 lines the NADP(+) pocket. Residues lysine 45 and lysine 105 each contribute to the NADPH site. Positions 45 and 105 each coordinate NADP(+). Na(+) is bound by residues glutamate 129, valine 132, glycine 134, and isoleucine 136. The NADP(+) site is built by glycine 187 and glutamate 190. The L-homoserine site is built by glutamate 190 and aspartate 201. The active-site Proton donor is lysine 205. Glycine 302 is a binding site for NADPH. Glycine 302 serves as a coordination point for NAD(+). Position 302 (glycine 302) interacts with NADP(+). In terms of domain architecture, ACT spans phenylalanine 350–arginine 426.

The protein belongs to the homoserine dehydrogenase family. Homotetramer. The cofactor is a metal cation.

It is found in the cytoplasm. The protein localises to the secreted. The enzyme catalyses L-homoserine + NADP(+) = L-aspartate 4-semialdehyde + NADPH + H(+). It participates in amino-acid biosynthesis; L-methionine biosynthesis via de novo pathway; L-homoserine from L-aspartate: step 3/3. The protein operates within amino-acid biosynthesis; L-threonine biosynthesis; L-threonine from L-aspartate: step 3/5. With respect to regulation, feedback inhibition by threonine. Activated by sodium ions. Its function is as follows. Catalyzes the conversion of L-aspartate-beta-semialdehyde (L-Asa) to L-homoserine (L-Hse), the third step in the biosynthesis of threonine and methionine from aspartate. Utilizes NADPH but not NADH as coenzyme. This chain is Homoserine dehydrogenase (hom), found in Bacillus subtilis (strain 168).